The chain runs to 361 residues: S-adenosylmethionine decarboxylase proenzyme (361 aa).

Residues glutamate 8 and glutamate 11 contribute to the active site. The active-site Schiff-base intermediate with substrate; via pyruvic acid is serine 68. Position 68 is a pyruvic acid (Ser); by autocatalysis (serine 68). Cysteine 82 acts as the Proton donor; for catalytic activity in catalysis. Catalysis depends on proton acceptor; for processing activity residues serine 234 and histidine 247. Positions 341 to 361 (SCGSPRSTLHRCWSETENEEE) are disordered.

It belongs to the eukaryotic AdoMetDC family. The cofactor is pyruvate. In terms of processing, is synthesized initially as an inactive proenzyme. Formation of the active enzyme involves a self-maturation process in which the active site pyruvoyl group is generated from an internal serine residue via an autocatalytic post-translational modification. Two non-identical subunits are generated from the proenzyme in this reaction, and the pyruvate is formed at the N-terminus of the alpha chain, which is derived from the carboxyl end of the proenzyme. The post-translation cleavage follows an unusual pathway, termed non-hydrolytic serinolysis, in which the side chain hydroxyl group of the serine supplies its oxygen atom to form the C-terminus of the beta chain, while the remainder of the serine residue undergoes an oxidative deamination to produce ammonia and the pyruvoyl group blocking the N-terminus of the alpha chain.

It carries out the reaction S-adenosyl-L-methionine + H(+) = S-adenosyl 3-(methylsulfanyl)propylamine + CO2. Its pathway is amine and polyamine biosynthesis; S-adenosylmethioninamine biosynthesis; S-adenosylmethioninamine from S-adenosyl-L-methionine: step 1/1. This Helianthus annuus (Common sunflower) protein is S-adenosylmethionine decarboxylase proenzyme (SAMDC).